Here is a 495-residue protein sequence, read N- to C-terminus: UDP-N-acetylmuramoyl-L-alanyl-D-glutamate--2,6-diaminopimelate ligase (495 aa).

Residues Leu-27, Ser-29, and 44–46 each bind UDP-N-acetyl-alpha-D-muramoyl-L-alanyl-D-glutamate; that span reads HQA. 116–122 contributes to the ATP binding site; that stretch reads GTNGKTT. UDP-N-acetyl-alpha-D-muramoyl-L-alanyl-D-glutamate contacts are provided by residues Asn-157, 158–159, Ser-185, Gln-191, and Arg-193; that span reads TT. Lys-225 is subject to N6-carboxylysine. Meso-2,6-diaminopimelate-binding positions include Arg-390, 414–417, Gly-465, and Glu-469; that span reads DNPR. Residues 414 to 417 carry the Meso-diaminopimelate recognition motif motif; that stretch reads DNPR.

The protein belongs to the MurCDEF family. MurE subfamily. Mg(2+) is required as a cofactor. In terms of processing, carboxylation is probably crucial for Mg(2+) binding and, consequently, for the gamma-phosphate positioning of ATP.

The protein resides in the cytoplasm. It carries out the reaction UDP-N-acetyl-alpha-D-muramoyl-L-alanyl-D-glutamate + meso-2,6-diaminopimelate + ATP = UDP-N-acetyl-alpha-D-muramoyl-L-alanyl-gamma-D-glutamyl-meso-2,6-diaminopimelate + ADP + phosphate + H(+). Its pathway is cell wall biogenesis; peptidoglycan biosynthesis. In terms of biological role, catalyzes the addition of meso-diaminopimelic acid to the nucleotide precursor UDP-N-acetylmuramoyl-L-alanyl-D-glutamate (UMAG) in the biosynthesis of bacterial cell-wall peptidoglycan. This is UDP-N-acetylmuramoyl-L-alanyl-D-glutamate--2,6-diaminopimelate ligase from Escherichia coli O157:H7.